The chain runs to 38 residues: Mating hormone A-factor 2 (38 aa).

Over residues 1–12 the composition is skewed to polar residues; it reads MQPITTASTQAT. A disordered region spans residues 1-20; that stretch reads MQPITTASTQATQKDKSSEK. Residues 1 to 23 constitute a propeptide that is removed on maturation; it reads MQPITTASTQATQKDKSSEKKDN. Position 35 is a cysteine methyl ester (C35). The S-farnesyl cysteine moiety is linked to residue C35. The propeptide at 36 to 38 is removed in mature form; sequence VIA.

Its subcellular location is the cell membrane. In terms of biological role, the active factor is excreted into the culture medium by haploid cells of the A mating type and acts on cells of the opposite mating type (type alpha). It mediates the conjugation process between the two types by inhibiting the initiation of DNA synthesis in type alpha cells and synchronizing them with type A. The protein is Mating hormone A-factor 2 (MFA2) of Saccharomyces cerevisiae (strain ATCC 204508 / S288c) (Baker's yeast).